The sequence spans 141 residues: Small ribosomal subunit protein bS6 (141 aa).

Residues 96 to 141 are disordered; the sequence is VTGPSEMLKAEENRSERRERRERPEHADGAEGDDSNDSDNSDNADE. A compositionally biased stretch (basic and acidic residues) spans 103–124; that stretch reads LKAEENRSERRERRERPEHADG. A compositionally biased stretch (acidic residues) spans 125 to 141; that stretch reads AEGDDSNDSDNSDNADE.

The protein belongs to the bacterial ribosomal protein bS6 family.

Its function is as follows. Binds together with bS18 to 16S ribosomal RNA. The sequence is that of Small ribosomal subunit protein bS6 from Pseudomonas entomophila (strain L48).